The following is a 332-amino-acid chain: Polygalacturonase inhibitor 1 (332 aa).

The first 24 residues, 1–24, serve as a signal peptide directing secretion; it reads MASTASFMLAVLLAVAVAAAPARA. Intrachain disulfides connect Cys27–Cys58 and Cys59–Cys66. 10 LRR repeats span residues 72–96, 97–118, 119–142, 143–166, 167–192, 193–215, 216–236, 237–259, 260–283, and 284–310; these read VNNV…GLTA, LMSL…CLTA, LSNL…SLAR, IRSL…SFSD, LPNL…VQGQ, FRSL…AQDE, INTV…LFAA, GRPI…KLVF, PPEL…SLAA, and LSTL…VIRH. An N-linked (GlcNAc...) asparagine glycan is attached at Asn131. 3 disulfide bridges follow: Cys298-Cys312, Cys298-Cys320, and Cys320-Cys329.

This sequence belongs to the polygalacturonase-inhibiting protein family. As to expression, highly expressed in calli, immature and mature panicles, and in three inner floral organs: lodicules, stamens and carpels. Expressed at low level in seedling roots and mature stems.

The protein localises to the secreted. It is found in the cell wall. Functionally, inhibitor of fungal polygalacturonase. Regulates floral organ number. This Oryza sativa subsp. japonica (Rice) protein is Polygalacturonase inhibitor 1.